A 199-amino-acid chain; its full sequence is Pyridoxine/pyridoxamine 5'-phosphate oxidase (199 aa).

FMN contacts are provided by residues 44-49, 59-60, K66, and Q91; these read RTVLLK and YT. Position 49 (K49) interacts with substrate. Substrate contacts are provided by Y109, R113, and S117. Residues 126–127 and W171 contribute to the FMN site; that span reads QS. Residue 177 to 179 participates in substrate binding; the sequence is RLH. R181 provides a ligand contact to FMN.

The protein belongs to the pyridoxamine 5'-phosphate oxidase family. Homodimer. FMN is required as a cofactor.

It catalyses the reaction pyridoxamine 5'-phosphate + O2 + H2O = pyridoxal 5'-phosphate + H2O2 + NH4(+). It carries out the reaction pyridoxine 5'-phosphate + O2 = pyridoxal 5'-phosphate + H2O2. The protein operates within cofactor metabolism; pyridoxal 5'-phosphate salvage; pyridoxal 5'-phosphate from pyridoxamine 5'-phosphate: step 1/1. It participates in cofactor metabolism; pyridoxal 5'-phosphate salvage; pyridoxal 5'-phosphate from pyridoxine 5'-phosphate: step 1/1. Its function is as follows. Catalyzes the oxidation of either pyridoxine 5'-phosphate (PNP) or pyridoxamine 5'-phosphate (PMP) into pyridoxal 5'-phosphate (PLP). This is Pyridoxine/pyridoxamine 5'-phosphate oxidase from Xanthomonas axonopodis pv. citri (strain 306).